Consider the following 548-residue polypeptide: mRNA cleavage and polyadenylation factor CLP1 (548 aa).

ATP is bound by residues Glu19, Lys60, and 123 to 128 (SSGKTT). Basic and acidic residues predominate over residues 437–478 (ESEVKEEVKEEKNEKDGEIKQDGEGEKKGEGKGEGEGEGEGK). Residues 437-500 (ESEVKEEVKE…DEEEVPFREE (64 aa)) form a disordered region. Over residues 479-494 (DGEEEGEAEGEDDEEE) the composition is skewed to acidic residues.

Belongs to the Clp1 family. Clp1 subfamily. In terms of assembly, component of a pre-mRNA cleavage factor complex. Interacts directly with PCF11.

The protein localises to the nucleus. In terms of biological role, required for endonucleolytic cleavage during polyadenylation-dependent pre-mRNA 3'-end formation. The polypeptide is mRNA cleavage and polyadenylation factor CLP1 (Cryptococcus neoformans var. neoformans serotype D (strain JEC21 / ATCC MYA-565) (Filobasidiella neoformans)).